Here is a 190-residue protein sequence, read N- to C-terminus: Elongation factor P-like protein (190 aa).

This sequence belongs to the elongation factor P family.

The polypeptide is Elongation factor P-like protein (Klebsiella pneumoniae subsp. pneumoniae (strain ATCC 700721 / MGH 78578)).